The primary structure comprises 201 residues: Segregation and condensation protein B (201 aa).

The protein belongs to the ScpB family. Homodimer. Homodimerization may be required to stabilize the binding of ScpA to the Smc head domains. Component of a cohesin-like complex composed of ScpA, ScpB and the Smc homodimer, in which ScpA and ScpB bind to the head domain of Smc. The presence of the three proteins is required for the association of the complex with DNA.

The protein localises to the cytoplasm. Functionally, participates in chromosomal partition during cell division. May act via the formation of a condensin-like complex containing Smc and ScpA that pull DNA away from mid-cell into both cell halves. This Enterococcus faecalis (strain ATCC 700802 / V583) protein is Segregation and condensation protein B.